The primary structure comprises 339 residues: Anthranilate phosphoribosyltransferase (339 aa).

Residues G81, 84–85, S89, 91–94, 109–117, and A121 contribute to the 5-phospho-alpha-D-ribose 1-diphosphate site; these read GD, NVSS, and KHGNRALSS. G81 contacts anthranilate. Position 93 (S93) interacts with Mg(2+). N112 serves as a coordination point for anthranilate. Anthranilate is bound at residue R167. Mg(2+)-binding residues include D225 and E226.

It belongs to the anthranilate phosphoribosyltransferase family. As to quaternary structure, homodimer. Mg(2+) is required as a cofactor.

It carries out the reaction N-(5-phospho-beta-D-ribosyl)anthranilate + diphosphate = 5-phospho-alpha-D-ribose 1-diphosphate + anthranilate. It participates in amino-acid biosynthesis; L-tryptophan biosynthesis; L-tryptophan from chorismate: step 2/5. Functionally, catalyzes the transfer of the phosphoribosyl group of 5-phosphorylribose-1-pyrophosphate (PRPP) to anthranilate to yield N-(5'-phosphoribosyl)-anthranilate (PRA). In Brucella suis biovar 1 (strain 1330), this protein is Anthranilate phosphoribosyltransferase.